The sequence spans 607 residues: MRMWLGYTLALLAGLHGSNVEGTNEVEKTRKRFEKAFSCKLSDEEVEIIRKSLVEVSGLETRILLPLIFHDRKLVASPVAKYRDINEREREYVEKVVRLLPYLAWRSVALVCAPGNWTLFLMYDVFKTTSFKDFDPVVLYRESKGRSRMRLMDLVVEIFKRNNCMVSRFGQGLAREAEVRIQGISSSLSAMERKREEEMLRKIKEHGERLCTKKNQEQIIEAQKIMCDACEYIWKREENRKSFVMGAHLKHLYLRMIDPSNDVEGPLLYYIDHEKMINTYEKYKSISIVAELVKKVVIEYEDINDESISSAVHEVKERESEEKRREEESLRNAEELLRMEEREKGEGKGPNGKGKKKRGKKGAGKAKEESKEEDRGEEEEESVEAEVPVEEMAAEGARPKKKRSKERSKGEDSCYRVHKRVLRWMKSVERIKYELDNGKEEKWKGKSMEEIEGQKVLHDIIEVLKLLRSRECDKFFVRTGKYMKGGSERWKMVALGILDEGGEKKVGNVEVGLFKGKREESVVYHLMFKPTSSEKTGKGSSPSFGKGDDVDEIEEDGSSDMSGFQYPPGVRSEVVKDKGEFRIVWRNPKDTSSVLRSLAVLQIPEIQ.

Disordered stretches follow at residues 312 to 410 (VHEV…RSKG) and 531 to 570 (TSSE…PPGV). The segment covering 313–347 (HEVKERESEEKRREEESLRNAEELLRMEEREKGEG) has biased composition (basic and acidic residues). A compositionally biased stretch (basic residues) spans 353 to 364 (KGKKKRGKKGAG). The segment covering 365-374 (KAKEESKEED) has biased composition (basic and acidic residues). The span at 375–393 (RGEEEEESVEAEVPVEEMA) shows a compositional bias: acidic residues. Positions 531 to 543 (TSSEKTGKGSSPS) are enriched in polar residues. Positions 549-558 (DVDEIEEDGS) are enriched in acidic residues.

It belongs to the UPF0329 family.

The protein is UPF0329 protein ECU06_1610 of Encephalitozoon cuniculi (strain GB-M1) (Microsporidian parasite).